Reading from the N-terminus, the 365-residue chain is Chorismate synthase (365 aa).

Position 46 (Arg-46) interacts with NADP(+). FMN-binding positions include 123 to 125 (RSS), 241 to 242 (NG), Gly-281, 296 to 300 (KPTPS), and Arg-322.

This sequence belongs to the chorismate synthase family. As to quaternary structure, homotetramer. Requires FMNH2 as cofactor.

It catalyses the reaction 5-O-(1-carboxyvinyl)-3-phosphoshikimate = chorismate + phosphate. It functions in the pathway metabolic intermediate biosynthesis; chorismate biosynthesis; chorismate from D-erythrose 4-phosphate and phosphoenolpyruvate: step 7/7. Catalyzes the anti-1,4-elimination of the C-3 phosphate and the C-6 proR hydrogen from 5-enolpyruvylshikimate-3-phosphate (EPSP) to yield chorismate, which is the branch point compound that serves as the starting substrate for the three terminal pathways of aromatic amino acid biosynthesis. This reaction introduces a second double bond into the aromatic ring system. This chain is Chorismate synthase, found in Helicobacter pylori (strain J99 / ATCC 700824) (Campylobacter pylori J99).